The sequence spans 252 residues: Chitooligosaccharide deacetylase (252 aa).

Mg(2+)-binding residues include His-61 and His-125.

This sequence belongs to the YdjC deacetylase family. ChbG subfamily. As to quaternary structure, homodimer. Requires Mg(2+) as cofactor.

The protein localises to the cytoplasm. It carries out the reaction N,N'-diacetylchitobiose + H2O = N-acetyl-beta-D-glucosaminyl-(1-&gt;4)-D-glucosamine + acetate. The enzyme catalyses diacetylchitobiose-6'-phosphate + H2O = N'-monoacetylchitobiose-6'-phosphate + acetate. It functions in the pathway glycan degradation; chitin degradation. Involved in the degradation of chitin. ChbG is essential for growth on the acetylated chitooligosaccharides chitobiose and chitotriose but is dispensable for growth on cellobiose and chitosan dimer, the deacetylated form of chitobiose. Deacetylation of chitobiose-6-P and chitotriose-6-P is necessary for both the activation of the chb promoter by the regulatory protein ChbR and the hydrolysis of phosphorylated beta-glucosides by the phospho-beta-glucosidase ChbF. Catalyzes the removal of only one acetyl group from chitobiose-6-P to yield monoacetylchitobiose-6-P, the inducer of ChbR and the substrate of ChbF. In Escherichia coli O127:H6 (strain E2348/69 / EPEC), this protein is Chitooligosaccharide deacetylase.